Consider the following 1256-residue polypeptide: Bifunctional autolysin (1256 aa).

The signal sequence occupies residues 1 to 29 (MAKKFNYKLPSMVALTLVGSAVTAHQVQA). Positions 103–138 (GDTRANQSATTNNTQPVAKSTSTTAPKTNTNVTNAG) are enriched in polar residues. Disordered regions lie at residues 103–151 (GDTR…NSEN), 173–219 (AAAP…KYKP), and 419–440 (TQST…PSTG). Composition is skewed to low complexity over residues 173–196 (AAAP…KVTT) and 421–439 (STTT…KPST). The segment at 199 to 775 (ASAQPRSVAA…AVAQPKTAVK (577 aa)) is N-acetylmuramoyl-L-alanine amidase. 7 consecutive GW domains span residues 443–517 (TVAA…YNTA), 519–593 (SPVN…DTAK), 612–686 (TVSS…YNNA), 688–762 (SPVN…VPAA), 784–859 (TTQT…VQNL), 861–936 (KEVK…APTA), and 943–1017 (AAKD…KELI). Residues 776 to 1256 (AYTVTKPQTT…GKYFDIPQYK (481 aa)) are endo-beta-N-acetylglucosaminidase.

In the N-terminal section; belongs to the N-acetylmuramoyl-L-alanine amidase 2 family. The protein in the C-terminal section; belongs to the glycosyl hydrolase 73 family. In terms of assembly, oligomer; forms a ring structure at the cell surface which is important for efficient partitioning of daughter cells after cell division. Undergoes proteolytic processing to generate the two extracellular lytic enzymes, probably at the septal region on the cell surface.

It is found in the secreted. The enzyme catalyses Hydrolyzes the link between N-acetylmuramoyl residues and L-amino acid residues in certain cell-wall glycopeptides.. It carries out the reaction an N(4)-(oligosaccharide-(1-&gt;3)-[oligosaccharide-(1-&gt;6)]-beta-D-Man-(1-&gt;4)-beta-D-GlcNAc-(1-&gt;4)-alpha-D-GlcNAc)-L-asparaginyl-[protein] + H2O = an oligosaccharide-(1-&gt;3)-[oligosaccharide-(1-&gt;6)]-beta-D-Man-(1-&gt;4)-D-GlcNAc + N(4)-(N-acetyl-beta-D-glucosaminyl)-L-asparaginyl-[protein]. Functionally, endohydrolysis of the di-N-acetylchitobiosyl unit in high-mannose glycopeptides and glycoproteins containing the -[(Man)5(GlcNAc)2]-Asn structure. One N-acetyl-D-glucosamine residue remains attached to the protein; the rest of the oligosaccharide is released intact. Cleaves the peptidoglycan connecting the daughter cells at the end of the cell division cycle, resulting in the separation of the two newly divided cells. Acts as an autolysin in penicillin-induced lysis. This is Bifunctional autolysin (atl) from Staphylococcus aureus (strain MW2).